A 225-amino-acid polypeptide reads, in one-letter code: 7-cyano-7-deazaguanine synthase (225 aa).

Position 9–19 (9–19 (LSGGLDSATCL)) interacts with ATP. C189, C199, C202, and C205 together coordinate Zn(2+).

The protein belongs to the QueC family. Requires Zn(2+) as cofactor.

It catalyses the reaction 7-carboxy-7-deazaguanine + NH4(+) + ATP = 7-cyano-7-deazaguanine + ADP + phosphate + H2O + H(+). Its pathway is purine metabolism; 7-cyano-7-deazaguanine biosynthesis. In terms of biological role, catalyzes the ATP-dependent conversion of 7-carboxy-7-deazaguanine (CDG) to 7-cyano-7-deazaguanine (preQ(0)). This Dechloromonas aromatica (strain RCB) protein is 7-cyano-7-deazaguanine synthase.